We begin with the raw amino-acid sequence, 463 residues long: NADH dehydrogenase [ubiquinone] iron-sulfur protein 2, mitochondrial (463 aa).

Residues 1-33 (MAALRVLCGLRGVAAQVLRPGAGVRLPIQPSRG) constitute a mitochondrion transit peptide. Lys62 carries the N6-acetyllysine modification. At Arg118 the chain carries Symmetric dimethylarginine. [4Fe-4S] cluster is bound by residues Cys326, Cys332, and Cys347.

The protein belongs to the complex I 49 kDa subunit family. As to quaternary structure, core subunit of respiratory chain NADH dehydrogenase (Complex I) which is composed of 45 different subunits. Component of the iron-sulfur (IP) fragment of the enzyme. Interacts with NDUFAF3. Interacts with NDUFAF7. Interacts with CERS2. The cofactor is [4Fe-4S] cluster. Dimethylation at Arg-118 by NDUFAF7 takes place after NDUFS2 assembles into the complex I, leading to stabilize the early intermediate complex.

Its subcellular location is the mitochondrion inner membrane. It carries out the reaction a ubiquinone + NADH + 5 H(+)(in) = a ubiquinol + NAD(+) + 4 H(+)(out). Its function is as follows. Core subunit of the mitochondrial membrane respiratory chain NADH dehydrogenase (Complex I) which catalyzes electron transfer from NADH through the respiratory chain, using ubiquinone as an electron acceptor. Essential for the catalytic activity and assembly of complex I. Redox-sensitive, critical component of the oxygen-sensing pathway in the pulmonary vasculature which plays a key role in acute pulmonary oxygen-sensing and hypoxic pulmonary vasoconstriction. Plays an important role in carotid body sensing of hypoxia. Essential for glia-like neural stem and progenitor cell proliferation, differentiation and subsequent oligodendrocyte or neuronal maturation. This is NADH dehydrogenase [ubiquinone] iron-sulfur protein 2, mitochondrial (NDUFS2) from Gorilla gorilla gorilla (Western lowland gorilla).